The primary structure comprises 98 residues: Cystatin-B (98 aa).

Positions 4 to 83 (GGTSQPVDAD…PCNGETLELS (80 aa)) constitute a Cystatin domain. The Secondary area of contact signature appears at 46–50 (QCVPG).

Belongs to the cystatin family. Ubiquitously expressed in normal and lipopolysaccharide (LPS)-stimulated tissues including brain, eye, gullet, heart, liver, muscle, stomach, kidney, spleen, pyloric ceca, intestine and gill.

It is found in the cytoplasm. Greatly decreased inhibitory activity against papain protease by metal ions including ZnSO(4), CuSO(4), HgCl(2) and CoCl(2). Decreased inhibitory activity against papain protease by detergents including Tween 20, SDS and Brij 35. Thiol protease inhibitor. Has high papain, bovine cathepsin B and fish cathepsins F and X inhibitory activity and inhibits fish cathepsins L, S and K to a lesser extent in vitro. May be involved in innate immunity. The chain is Cystatin-B from Paralichthys olivaceus (Bastard halibut).